A 309-amino-acid chain; its full sequence is Phosphoserine phosphatase (309 aa).

D97 (nucleophile) is an active-site residue. D97 and D99 together coordinate Mg(2+). The active-site Proton donor is the D99. Residues E106, R142, 186 to 187 (SG), and K232 contribute to the substrate site. Residue D255 participates in Mg(2+) binding. N258 contacts substrate.

It belongs to the HAD-like hydrolase superfamily. SerB family. Mg(2+) is required as a cofactor.

The catalysed reaction is O-phospho-L-serine + H2O = L-serine + phosphate. The enzyme catalyses O-phospho-D-serine + H2O = D-serine + phosphate. It participates in amino-acid biosynthesis; L-serine biosynthesis; L-serine from 3-phospho-D-glycerate: step 3/3. The sequence is that of Phosphoserine phosphatase (SER2) from Saccharomyces cerevisiae (strain ATCC 204508 / S288c) (Baker's yeast).